The primary structure comprises 635 residues: Threonine--tRNA ligase (635 aa).

Residues 1–61 (MIVITLPDGS…EGDARLAIVT (61 aa)) form the TGS domain. The interval 242–533 (DHRKLGRELD…LIEQHAGALP (292 aa)) is catalytic. The Zn(2+) site is built by Cys333, His384, and His510.

Belongs to the class-II aminoacyl-tRNA synthetase family. In terms of assembly, homodimer. Zn(2+) is required as a cofactor.

The protein resides in the cytoplasm. The catalysed reaction is tRNA(Thr) + L-threonine + ATP = L-threonyl-tRNA(Thr) + AMP + diphosphate + H(+). In terms of biological role, catalyzes the attachment of threonine to tRNA(Thr) in a two-step reaction: L-threonine is first activated by ATP to form Thr-AMP and then transferred to the acceptor end of tRNA(Thr). Also edits incorrectly charged L-seryl-tRNA(Thr). In Methylibium petroleiphilum (strain ATCC BAA-1232 / LMG 22953 / PM1), this protein is Threonine--tRNA ligase.